The sequence spans 356 residues: WAT1-related protein At1g68170 (356 aa).

The next 10 helical transmembrane spans lie at 4 to 24 (ITAM…FKLA), 33 to 53 (VLVA…CFIF), 65 to 85 (LMLL…ILTI), 94 to 114 (TFTS…AALL), 125 to 145 (VGLA…VFIF), 176 to 196 (ISIL…LWFL), 210 to 230 (WNAT…ALCW), 245 to 265 (LLTI…VNAW), 273 to 293 (LFVS…GSFL), and 298 to 318 (LHLG…IVLW). 2 EamA domains span residues 14 to 142 (TAGL…GALV) and 191 to 317 (ISLW…YIVL).

This sequence belongs to the drug/metabolite transporter (DMT) superfamily. Plant drug/metabolite exporter (P-DME) (TC 2.A.7.4) family.

Its subcellular location is the membrane. The polypeptide is WAT1-related protein At1g68170 (Arabidopsis thaliana (Mouse-ear cress)).